The primary structure comprises 371 residues: RNA-binding protein 48 (371 aa).

The 79-residue stretch at 46–124 (QYLLIQGVPA…GLLHVCYAPE (79 aa)) folds into the RRM domain. Disordered stretches follow at residues 157 to 191 (KPVP…PESP) and 348 to 371 (VPKP…RRRI). The segment covering 158 to 170 (PVPEQKGTKDSRQ) has biased composition (basic and acidic residues).

Belongs to the RBM48 family. Component of the minor spliceosome. Within this complex, interacts with ARMC7 and PRPF8/PRP8.

In terms of biological role, as a component of the minor spliceosome, involved in the splicing of U12-type introns in pre-mRNAs. In Mus musculus (Mouse), this protein is RNA-binding protein 48 (Rbm48).